The primary structure comprises 111 residues: Rhodanese domain-containing protein CG4456 (111 aa).

A Rhodanese domain is found at 12–110 (NHPDVYLIDV…SWNEWAQKEG (99 aa)).

This Drosophila melanogaster (Fruit fly) protein is Rhodanese domain-containing protein CG4456.